A 383-amino-acid polypeptide reads, in one-letter code: Gap junction alpha-1 protein (383 aa).

Over 2-23 the chain is Cytoplasmic; it reads GDWSALGKLLDKVQAYSTAGGK. Ser5 is modified (phosphoserine). A helical membrane pass occupies residues 24–44; sequence VWLSVLFIFRILLLGTAVESA. Residues 45–76 lie on the Extracellular side of the membrane; that stretch reads WGDEQSAFRCNTQQPGCENVCYDKSFPISHVR. Cystine bridges form between Cys54-Cys193 and Cys188-Cys199. A helical membrane pass occupies residues 77-97; it reads FWVLQIIFVSVPTLLYLAHVF. The Cytoplasmic segment spans residues 98-156; sequence YVMRKEEKLNKKEEELKVVAQTDGANVDMHLKQIEIKKFKYGIEEHGKVKMRGGLLRTY. A Glycyl lysine isopeptide (Lys-Gly) (interchain with G-Cter in SUMO) cross-link involves residue Lys145. A helical transmembrane segment spans residues 157-177; the sequence is IISILFKSVFEVAFLLIQWYI. Residues 178-208 lie on the Extracellular side of the membrane; it reads YGFSLSAVYTCKRDPCPHQVDCFLSRPTEKT. Residues 209 to 229 traverse the membrane as a helical segment; that stretch reads IFIIFMLVVSLVSLALNIIEL. Residues 230–383 are Cytoplasmic-facing; it reads FYVFFKGVKD…SRPRPDDLEI (154 aa). Lys238 participates in a covalent cross-link: Glycyl lysine isopeptide (Lys-Gly) (interchain with G-Cter in SUMO). Positions 245-383 are interaction with NOV; that stretch reads SDPYHTTTGP…SRPRPDDLEI (139 aa). Tyr248 bears the Phosphotyrosine mark. Ser256, Ser258, and Ser263 each carry phosphoserine. Positions 265–383 are interaction with UBQLN4; that stretch reads KYAYFNGCSS…SRPRPDDLEI (119 aa). Cys272 bears the S-nitrosocysteine mark. Thr276 is subject to Phosphothreonine. Ser307 and Ser315 each carry phosphoserine. Residues 318–333 are compositionally biased toward polar residues; sequence QNRMGQAGSTISNSHA. The segment at 318–383 is disordered; it reads QNRMGQAGST…SRPRPDDLEI (66 aa). Ser326 carries the phosphoserine; by CK1 modification. Thr327 is subject to Phosphothreonine. Phosphoserine; by CK1 is present on residues Ser329 and Ser331. Positions 339–352 are enriched in basic and acidic residues; sequence PDDHQNSKKLDAGH. Phosphoserine occurs at positions 345 and 366. Residues 363-375 are compositionally biased toward low complexity; sequence RPSSRASSRASSR. Ser369 bears the Phosphoserine; by PKC/PRKCG and PKC/PRKCD mark. Phosphoserine is present on residues Ser370 and Ser374.

The protein belongs to the connexin family. Alpha-type (group II) subfamily. As to quaternary structure, a connexon is composed of a hexamer of connexins. Interacts with SGSM3. Interacts with RIC1/CIP150. Interacts with CNST and CSNK1D. Interacts (via C-terminus) with TJP1. Interacts (via C-terminus) with SRC (via SH3 domain). Interacts (not ubiquitinated) with UBQLN4 (via UBA domain). Interacts with NOV. Interacts with TMEM65. Interacts with ANK3/ANKG and PKP2. In terms of processing, phosphorylation at Ser-326, Ser-329 and Ser-331 by CK1 modulates gap junction assembly. Phosphorylated at Ser-369 by PRKCG; phosphorylation induces disassembly of gap junction plaques and inhibition of gap junction activity. Phosphorylation at Ser-369 by PRKCD triggers its internalization into small vesicles leading to proteasome-mediated degradation. Sumoylated with SUMO1, SUMO2 and SUMO3, which may regulate the level of functional Cx43 gap junctions at the plasma membrane. May be desumoylated by SENP1 or SENP2. Post-translationally, acetylated in the developing cortex; leading to delocalization from the cell membrane.

Its subcellular location is the cell membrane. It is found in the cell junction. The protein localises to the gap junction. It localises to the endoplasmic reticulum. Functionally, gap junction protein that acts as a regulator of bladder capacity. A gap junction consists of a cluster of closely packed pairs of transmembrane channels, the connexons, through which materials of low MW diffuse from one cell to a neighboring cell. May play a critical role in the physiology of hearing by participating in the recycling of potassium to the cochlear endolymph. Negative regulator of bladder functional capacity: acts by enhancing intercellular electrical and chemical transmission, thus sensitizing bladder muscles to cholinergic neural stimuli and causing them to contract. May play a role in cell growth inhibition through the regulation of NOV expression and localization. Plays an essential role in gap junction communication in the ventricles. The protein is Gap junction alpha-1 protein (GJA1) of Bos taurus (Bovine).